The chain runs to 509 residues: Diacylglycerol kinase 5 (509 aa).

Positions 36–187 (TPASPVLVFI…IDNWHILMRM (152 aa)) constitute a DAGKc domain. Basic and acidic residues predominate over residues 439–452 (RSVFDPSTPRHQDG). Positions 439 to 509 (RSVFDPSTPR…SNVHGWSHVL (71 aa)) are disordered. A compositionally biased stretch (acidic residues) spans 453–467 (AEDYDDNEDDSVAEG). Residues 468–489 (EEFRKFGAADTFKIPDEGEHSN) show a composition bias toward basic and acidic residues. Residues 490 to 500 (KKGRASRRRNS) show a composition bias toward basic residues.

It belongs to the eukaryotic diacylglycerol kinase family. As to quaternary structure, monomer.

The catalysed reaction is a 1,2-diacyl-sn-glycerol + ATP = a 1,2-diacyl-sn-glycero-3-phosphate + ADP + H(+). Its function is as follows. Phosphorylates the second messenger diacylglycerol (DAG) to generate phosphatidic acid (PA), another important signaling molecule. PA is required for plant development and responses to abiotic stress and pathogen attack. May be involved in the accumulation of PA during cold stress. The protein is Diacylglycerol kinase 5 (DGK5) of Arabidopsis thaliana (Mouse-ear cress).